Reading from the N-terminus, the 497-residue chain is MAAAGEGTPSSRGPRRDPPRRPPRNGYGVYVYPNSFFRYEGEWKAGRKHGHGKLLFKDGSYYEGAFVDGEITGEGRRHWAWSGDTFSGQFVLGEPQGYGVMEYKAGGCYEGEVSHGMREGHGFLVDRDGQVYQGSFHDNKRHGPGQMLFQNGDKYDGDWVRDRRQGHGVLRCADGSTYKGQWHSDVFSGLGSMAHCSGVTYYGLWINGHPAEQATRIVILGPEVMEVAQGSPFSVNVQLLQDHGEIAKSESGRVLQISAGVRYVQLSAYSEVNFFKVDRDNQETLIQTPFGFECIPYPVSSPAAGVPGPRAAKGGAEADVPLPRGDLELHLGALHGQEDTPGGLLARGHAPHCPGACQRVEQGCAEFTDVLLGPPPPGYHPFLFLDSLHKKAGGRSRGGLHPRGTPPTAQEPPGGSRPEGRATEEQAAAAHLGEYVLMIRDVTTPPFLGRRLPPAFKHLRVVAKRAGQPPHVLEEGPEASSSWQAAHSCTPEPPAPR.

A disordered region spans residues 1-27 (MAAAGEGTPSSRGPRRDPPRRPPRNGY). 7 MORN repeats span residues 39–61 (YEGE…DGSY), 62–84 (YEGA…WSGD), 86–108 (FSGQ…AGGC), 109–131 (YEGE…DGQV), 132–154 (YQGS…NGDK), 155–177 (YDGD…DGST), and 178–200 (YKGQ…SGVT). Disordered regions lie at residues 393–425 (GGRS…ATEE) and 468–497 (QPPH…PAPR).

This chain is MORN repeat-containing protein 1 (MORN1), found in Homo sapiens (Human).